The following is a 550-amino-acid chain: Dihydroxy-acid dehydratase (550 aa).

D78 contributes to the Mg(2+) binding site. C119 provides a ligand contact to [2Fe-2S] cluster. The Mg(2+) site is built by D120 and K121. K121 bears the N6-carboxylysine mark. Residue C191 coordinates [2Fe-2S] cluster. E440 lines the Mg(2+) pocket. S466 (proton acceptor) is an active-site residue.

Belongs to the IlvD/Edd family. As to quaternary structure, homodimer. [2Fe-2S] cluster is required as a cofactor. Requires Mg(2+) as cofactor.

The enzyme catalyses (2R)-2,3-dihydroxy-3-methylbutanoate = 3-methyl-2-oxobutanoate + H2O. It catalyses the reaction (2R,3R)-2,3-dihydroxy-3-methylpentanoate = (S)-3-methyl-2-oxopentanoate + H2O. It functions in the pathway amino-acid biosynthesis; L-isoleucine biosynthesis; L-isoleucine from 2-oxobutanoate: step 3/4. It participates in amino-acid biosynthesis; L-valine biosynthesis; L-valine from pyruvate: step 3/4. In terms of biological role, functions in the biosynthesis of branched-chain amino acids. Catalyzes the dehydration of (2R,3R)-2,3-dihydroxy-3-methylpentanoate (2,3-dihydroxy-3-methylvalerate) into 2-oxo-3-methylpentanoate (2-oxo-3-methylvalerate) and of (2R)-2,3-dihydroxy-3-methylbutanoate (2,3-dihydroxyisovalerate) into 2-oxo-3-methylbutanoate (2-oxoisovalerate), the penultimate precursor to L-isoleucine and L-valine, respectively. The chain is Dihydroxy-acid dehydratase from Methanococcus vannielii (strain ATCC 35089 / DSM 1224 / JCM 13029 / OCM 148 / SB).